Here is an 88-residue protein sequence, read N- to C-terminus: Small ribosomal subunit protein uS19 (88 aa).

This sequence belongs to the universal ribosomal protein uS19 family.

Protein S19 forms a complex with S13 that binds strongly to the 16S ribosomal RNA. This chain is Small ribosomal subunit protein uS19, found in Ureaplasma parvum serovar 3 (strain ATCC 27815 / 27 / NCTC 11736).